The chain runs to 64 residues: Large ribosomal subunit protein bL33c (64 aa).

The protein belongs to the bacterial ribosomal protein bL33 family.

Its subcellular location is the plastid. The protein localises to the chloroplast. The chain is Large ribosomal subunit protein bL33c (rpl33) from Cyanidium caldarium (Red alga).